A 285-amino-acid chain; its full sequence is 4-diphosphocytidyl-2-C-methyl-D-erythritol kinase (285 aa).

Lys-12 is a catalytic residue. 95–105 is a binding site for ATP; it reads PMGGGVGGGSS. Residue Asp-137 is part of the active site.

The protein belongs to the GHMP kinase family. IspE subfamily.

It carries out the reaction 4-CDP-2-C-methyl-D-erythritol + ATP = 4-CDP-2-C-methyl-D-erythritol 2-phosphate + ADP + H(+). Its pathway is isoprenoid biosynthesis; isopentenyl diphosphate biosynthesis via DXP pathway; isopentenyl diphosphate from 1-deoxy-D-xylulose 5-phosphate: step 3/6. Catalyzes the phosphorylation of the position 2 hydroxy group of 4-diphosphocytidyl-2C-methyl-D-erythritol. The sequence is that of 4-diphosphocytidyl-2-C-methyl-D-erythritol kinase from Actinobacillus pleuropneumoniae serotype 5b (strain L20).